The primary structure comprises 429 residues: Probable proton-coupled zinc antiporter SLC30A4 (429 aa).

The Cytoplasmic portion of the chain corresponds to 1–113 (MAGSGAWKRL…LLKQRKVKTR (113 aa)). A helical membrane pass occupies residues 114 to 134 (LTIAAVLYLLFMIGELVGGYI). The Lumenal segment spans residues 135–143 (ANSLAIMTD). Residues 144–164 (ALHMLTDLSAIILTLLALWLS) traverse the membrane as a helical segment. Residues His-146 and Asp-150 each coordinate Zn(2+). Residues 165 to 178 (SKSPTKRFTFGFHR) are Cytoplasmic-facing. A helical membrane pass occupies residues 179–199 (LEVLSAMISVLLVYILMGFLL). Residues 200 to 216 (YEAVQRTIHMKYEINGD) lie on the Lumenal side of the membrane. A helical membrane pass occupies residues 217–237 (IMLITAAIGVAVNVIMGFLLN). At 238 to 274 (QSGHHHAHSHSLPSNSPTTGPRCGHNQGQDSLAVRAA) the chain is on the cytoplasmic side. Positions 240–264 (GHHHAHSHSLPSNSPTTGPRCGHNQ) are zinc binding. Residues 275–295 (FVHALGDLVQSVGVLIAAYII) form a helical membrane-spanning segment. His-277 and Asp-281 together coordinate Zn(2+). Residues 296 to 310 (RFKPEYRIADPICTY) lie on the Lumenal side of the membrane. Residues 311-331 (VFSLLVAFTTFRIIWDTVVII) traverse the membrane as a helical segment. Topologically, residues 332–429 (LEGVPSHLNV…TCANCQSSSS (98 aa)) are cytoplasmic.

This sequence belongs to the cation diffusion facilitator (CDF) transporter (TC 2.A.4) family. SLC30A subfamily. Homodimerization could regulate efficiency for zinc transport. Interacts with TMEM163.

The protein localises to the endosome membrane. It is found in the late endosome membrane. The protein resides in the lysosome membrane. The catalysed reaction is Zn(2+)(in) + 2 H(+)(out) = Zn(2+)(out) + 2 H(+)(in). In terms of biological role, probable proton-coupled zinc ion antiporter mediating zinc import from cytoplasm potentially into the endocytic compartment. Controls zinc deposition in milk. The polypeptide is Probable proton-coupled zinc antiporter SLC30A4 (Bos taurus (Bovine)).